The sequence spans 159 residues: MRCPFCEYNGTRVLDSRPFNHNKSIRRRRECEACERRFTTFEMVEETPLLIVKKDGTREEFSRDKILRGLVRACEKRPVPLEVLENVVNDIEKELRSCGQAEIPSNDVGEKVMERLYHVDEVAYVRFASVYRQFKDINVFMKELEELLAQARNSSFPKE.

A zinc finger lies at 3 to 34; the sequence is CPFCEYNGTRVLDSRPFNHNKSIRRRRECEAC. One can recognise an ATP-cone domain in the interval 49-139; that stretch reads LLIVKKDGTR…VYRQFKDINV (91 aa).

It belongs to the NrdR family. Zn(2+) is required as a cofactor.

Its function is as follows. Negatively regulates transcription of bacterial ribonucleotide reductase nrd genes and operons by binding to NrdR-boxes. In Brevibacillus brevis (strain 47 / JCM 6285 / NBRC 100599), this protein is Transcriptional repressor NrdR.